The primary structure comprises 404 residues: Cysteine desulfurase IscS (404 aa).

Residues 75 to 76 (AT), Asn-155, Gln-183, and 203 to 205 (SAH) contribute to the pyridoxal 5'-phosphate site. Lys-206 carries the post-translational modification N6-(pyridoxal phosphate)lysine. Residue Thr-243 coordinates pyridoxal 5'-phosphate. Cys-328 (cysteine persulfide intermediate) is an active-site residue. Cys-328 is a [2Fe-2S] cluster binding site.

The protein belongs to the class-V pyridoxal-phosphate-dependent aminotransferase family. NifS/IscS subfamily. Homodimer. Forms a heterotetramer with IscU, interacts with other sulfur acceptors. Pyridoxal 5'-phosphate is required as a cofactor.

Its subcellular location is the cytoplasm. The enzyme catalyses (sulfur carrier)-H + L-cysteine = (sulfur carrier)-SH + L-alanine. It functions in the pathway cofactor biosynthesis; iron-sulfur cluster biosynthesis. In terms of biological role, master enzyme that delivers sulfur to a number of partners involved in Fe-S cluster assembly, tRNA modification or cofactor biosynthesis. Catalyzes the removal of elemental sulfur atoms from cysteine to produce alanine. Functions as a sulfur delivery protein for Fe-S cluster synthesis onto IscU, an Fe-S scaffold assembly protein, as well as other S acceptor proteins. The sequence is that of Cysteine desulfurase IscS from Pseudomonas aeruginosa (strain LESB58).